The chain runs to 509 residues: ATP synthase subunit alpha (509 aa).

169–176 (GDRQTGKT) is an ATP binding site.

This sequence belongs to the ATPase alpha/beta chains family. F-type ATPases have 2 components, CF(1) - the catalytic core - and CF(0) - the membrane proton channel. CF(1) has five subunits: alpha(3), beta(3), gamma(1), delta(1), epsilon(1). CF(0) has three main subunits: a(1), b(2) and c(9-12). The alpha and beta chains form an alternating ring which encloses part of the gamma chain. CF(1) is attached to CF(0) by a central stalk formed by the gamma and epsilon chains, while a peripheral stalk is formed by the delta and b chains.

It localises to the cell inner membrane. It carries out the reaction ATP + H2O + 4 H(+)(in) = ADP + phosphate + 5 H(+)(out). Produces ATP from ADP in the presence of a proton gradient across the membrane. The alpha chain is a regulatory subunit. The chain is ATP synthase subunit alpha from Brucella suis biovar 1 (strain 1330).